The sequence spans 250 residues: Small ribosomal subunit protein uS3 (250 aa).

The 71-residue stretch at 39 to 109 folds into the KH type-2 domain; that stretch reads IRNYVQARLK…EVKIDVVEVI (71 aa). Over residues 225-239 the composition is skewed to basic and acidic residues; it reads INERRGDSKSRPRDP. The segment at 225–250 is disordered; sequence INERRGDSKSRPRDPRNKRRRRTKRS. Residues 240–250 show a composition bias toward basic residues; sequence RNKRRRRTKRS.

The protein belongs to the universal ribosomal protein uS3 family. As to quaternary structure, part of the 30S ribosomal subunit. Forms a tight complex with proteins S10 and S14.

Functionally, binds the lower part of the 30S subunit head. Binds mRNA in the 70S ribosome, positioning it for translation. In Chlorobium phaeobacteroides (strain DSM 266 / SMG 266 / 2430), this protein is Small ribosomal subunit protein uS3.